The chain runs to 165 residues: Phosphopantetheine adenylyltransferase (165 aa).

Residue S10 coordinates substrate. Residues 10 to 11 (SF) and H18 each bind ATP. Positions 42, 79, and 93 each coordinate substrate. Residues 94-96 (GLR), E104, and 129-135 (VRPITAT) each bind ATP.

It belongs to the bacterial CoaD family. As to quaternary structure, homohexamer. It depends on Mg(2+) as a cofactor.

The protein localises to the cytoplasm. It carries out the reaction (R)-4'-phosphopantetheine + ATP + H(+) = 3'-dephospho-CoA + diphosphate. It functions in the pathway cofactor biosynthesis; coenzyme A biosynthesis; CoA from (R)-pantothenate: step 4/5. In terms of biological role, reversibly transfers an adenylyl group from ATP to 4'-phosphopantetheine, yielding dephospho-CoA (dPCoA) and pyrophosphate. This chain is Phosphopantetheine adenylyltransferase, found in Rhodopseudomonas palustris (strain HaA2).